A 210-amino-acid polypeptide reads, in one-letter code: Chaperone protein TorD (210 aa).

Belongs to the TorD/DmsD family. TorD subfamily.

The protein localises to the cytoplasm. Involved in the biogenesis of TorA. Acts on TorA before the insertion of the molybdenum cofactor and, as a result, probably favors a conformation of the apoenzyme that is competent for acquiring the cofactor. This Salmonella paratyphi B (strain ATCC BAA-1250 / SPB7) protein is Chaperone protein TorD.